A 103-amino-acid polypeptide reads, in one-letter code: Small ribosomal subunit protein uS10 (103 aa).

It belongs to the universal ribosomal protein uS10 family. In terms of assembly, part of the 30S ribosomal subunit.

Involved in the binding of tRNA to the ribosomes. The polypeptide is Small ribosomal subunit protein uS10 (Chromohalobacter salexigens (strain ATCC BAA-138 / DSM 3043 / CIP 106854 / NCIMB 13768 / 1H11)).